Reading from the N-terminus, the 137-residue chain is Large ribosomal subunit protein uL16 (137 aa).

The protein belongs to the universal ribosomal protein uL16 family. In terms of assembly, part of the 50S ribosomal subunit.

In terms of biological role, binds 23S rRNA and is also seen to make contacts with the A and possibly P site tRNAs. This is Large ribosomal subunit protein uL16 from Rhodopseudomonas palustris (strain BisB5).